Reading from the N-terminus, the 79-residue chain is UPF0349 protein BCE_5075 (79 aa).

The protein belongs to the UPF0349 family.

This Bacillus cereus (strain ATCC 10987 / NRS 248) protein is UPF0349 protein BCE_5075.